The primary structure comprises 126 residues: Thiocyanate hydrolase subunit alpha (126 aa).

As to quaternary structure, heterododecamer consisting of 4 alpha, 4 beta, and 4 gamma subunits.

It catalyses the reaction thiocyanate + H2O + 2 H(+) = carbonyl sulfide + NH4(+). It functions in the pathway organosulfur degradation; thiocyanate degradation. Functionally, involved in the degradation of thiocyanate. This chain is Thiocyanate hydrolase subunit alpha (scnA), found in Thiobacillus thioparus.